Consider the following 273-residue polypeptide: 4-diphosphocytidyl-2-C-methyl-D-erythritol kinase (273 aa).

K12 is a catalytic residue. 90 to 100 is an ATP binding site; that stretch reads PVASGIGGGSA. D122 is a catalytic residue.

It belongs to the GHMP kinase family. IspE subfamily.

The enzyme catalyses 4-CDP-2-C-methyl-D-erythritol + ATP = 4-CDP-2-C-methyl-D-erythritol 2-phosphate + ADP + H(+). It participates in isoprenoid biosynthesis; isopentenyl diphosphate biosynthesis via DXP pathway; isopentenyl diphosphate from 1-deoxy-D-xylulose 5-phosphate: step 3/6. Functionally, catalyzes the phosphorylation of the position 2 hydroxy group of 4-diphosphocytidyl-2C-methyl-D-erythritol. The sequence is that of 4-diphosphocytidyl-2-C-methyl-D-erythritol kinase from Paracoccus denitrificans (strain Pd 1222).